The sequence spans 315 residues: Calumenin-B (315 aa).

The signal sequence occupies residues 1 to 19 (MEQWPLLFVVALCILQSSS). Residues 22 to 39 (MEKKDRVHHDAPLSNKDH) are compositionally biased toward basic and acidic residues. A disordered region spans residues 22-42 (MEKKDRVHHDAPLSNKDHDDE). 6 consecutive EF-hand domains span residues 68–103 (ESKE…AQRR), 104–139 (WIYE…YILD), 151–186 (QMMT…EEFD), 188–223 (MKDI…QNGD), 229–264 (WVKT…ADYD), and 265–300 (HAEA…FVGS). Ca(2+)-binding residues include D81, D83, D85, E92, D117, N119, D121, E128, D164, D166, D168, R170, E175, D201, N203, D205, E212, D242, N244, D246, R248, E253, D278, D280, D282, R284, and E289. The Prevents secretion from ER motif lies at 312–315 (HDEF).

The protein belongs to the CREC family. In terms of assembly, interacts with ggcx.

The protein resides in the endoplasmic reticulum membrane. It localises to the golgi apparatus. Its subcellular location is the secreted. It is found in the melanosome. The protein localises to the sarcoplasmic reticulum lumen. In terms of biological role, involved in regulation of vitamin K-dependent carboxylation of multiple N-terminal glutamate residues. Seems to inhibit gamma-carboxylase ggcx. Binds 7 calcium ions with a low affinity. The sequence is that of Calumenin-B (calub) from Danio rerio (Zebrafish).